Reading from the N-terminus, the 351-residue chain is UDP-3-O-acylglucosamine N-acyltransferase (351 aa).

Catalysis depends on H240, which acts as the Proton acceptor.

Belongs to the transferase hexapeptide repeat family. LpxD subfamily. Homotrimer.

The enzyme catalyses a UDP-3-O-[(3R)-3-hydroxyacyl]-alpha-D-glucosamine + a (3R)-hydroxyacyl-[ACP] = a UDP-2-N,3-O-bis[(3R)-3-hydroxyacyl]-alpha-D-glucosamine + holo-[ACP] + H(+). Its pathway is bacterial outer membrane biogenesis; LPS lipid A biosynthesis. In terms of biological role, catalyzes the N-acylation of UDP-3-O-acylglucosamine using 3-hydroxyacyl-ACP as the acyl donor. Is involved in the biosynthesis of lipid A, a phosphorylated glycolipid that anchors the lipopolysaccharide to the outer membrane of the cell. This Pseudomonas putida (strain ATCC 47054 / DSM 6125 / CFBP 8728 / NCIMB 11950 / KT2440) protein is UDP-3-O-acylglucosamine N-acyltransferase.